A 253-amino-acid chain; its full sequence is Ribosome maturation protein SBDS (253 aa).

This sequence belongs to the SDO1/SBDS family. As to quaternary structure, associates with the 60S ribosomal subunit.

It is found in the cytoplasm. Its subcellular location is the nucleus. The protein resides in the nucleolus. The protein localises to the nucleoplasm. It localises to the cytoskeleton. It is found in the spindle. Functionally, required for the assembly of mature ribosomes and ribosome biogenesis. Together with K10C3.5b/EFL1, triggers the GTP-dependent release of ribosome maturation factors from 60S pre-ribosomes in the cytoplasm, thereby activating ribosomes for translation competence by allowing 80S ribosome assembly. Required for normal levels of protein synthesis. May play a role in cellular stress resistance. May play a role in cellular response to DNA damage. May play a role in cell proliferation. The protein is Ribosome maturation protein SBDS (sbds-1) of Caenorhabditis elegans.